A 218-amino-acid chain; its full sequence is UPF0598 protein C8orf82 homolog (218 aa).

This sequence belongs to the UPF0598 family.

This chain is UPF0598 protein C8orf82 homolog, found in Mus musculus (Mouse).